The primary structure comprises 340 residues: UDP-3-O-(3-hydroxymyristoyl)glucosamine N-acyltransferase (340 aa).

His-239 acts as the Proton acceptor in catalysis.

The protein belongs to the transferase hexapeptide repeat family. LpxD subfamily. In terms of assembly, homotrimer.

It carries out the reaction a UDP-3-O-[(3R)-3-hydroxyacyl]-alpha-D-glucosamine + a (3R)-hydroxyacyl-[ACP] = a UDP-2-N,3-O-bis[(3R)-3-hydroxyacyl]-alpha-D-glucosamine + holo-[ACP] + H(+). It catalyses the reaction UDP-3-O-[(3R)-3-hydroxytetradecanoyl]-alpha-D-glucosamine + (3R)-hydroxytetradecanoyl-[ACP] = UDP-2-N,3-O-bis[(3R)-3-hydroxytetradecanoyl]-alpha-D-glucosamine + holo-[ACP] + H(+). The protein operates within glycolipid biosynthesis; lipid IV(A) biosynthesis; lipid IV(A) from (3R)-3-hydroxytetradecanoyl-[acyl-carrier-protein] and UDP-N-acetyl-alpha-D-glucosamine: step 3/6. Its function is as follows. Catalyzes the N-acylation of UDP-3-O-(hydroxytetradecanoyl)glucosamine using 3-hydroxytetradecanoyl-ACP as the acyl donor. Is involved in the biosynthesis of lipid A, a phosphorylated glycolipid that anchors the lipopolysaccharide to the outer membrane of the cell. This Sodalis glossinidius (strain morsitans) protein is UDP-3-O-(3-hydroxymyristoyl)glucosamine N-acyltransferase.